The chain runs to 258 residues: Acyl-[acyl-carrier-protein]--UDP-N-acetylglucosamine O-acyltransferase (258 aa).

This sequence belongs to the transferase hexapeptide repeat family. LpxA subfamily. In terms of assembly, homotrimer.

It localises to the cytoplasm. The enzyme catalyses a (3R)-hydroxyacyl-[ACP] + UDP-N-acetyl-alpha-D-glucosamine = a UDP-3-O-[(3R)-3-hydroxyacyl]-N-acetyl-alpha-D-glucosamine + holo-[ACP]. It participates in glycolipid biosynthesis; lipid IV(A) biosynthesis; lipid IV(A) from (3R)-3-hydroxytetradecanoyl-[acyl-carrier-protein] and UDP-N-acetyl-alpha-D-glucosamine: step 1/6. In terms of biological role, involved in the biosynthesis of lipid A, a phosphorylated glycolipid that anchors the lipopolysaccharide to the outer membrane of the cell. In Pseudomonas putida (strain W619), this protein is Acyl-[acyl-carrier-protein]--UDP-N-acetylglucosamine O-acyltransferase.